Here is a 175-residue protein sequence, read N- to C-terminus: Calcineurin subunit B (175 aa).

EF-hand domains lie at 21 to 56, 60 to 88, 90 to 125, and 131 to 166; these read PELMRLKKRFMKLDKDGSGSIDKDEFLQIPQIANNP, RMIAIFDEDGSGTVDFQEFVGGLSAFSSK, GRDEKLRFAFKVYDMDRDGYISNGELYLVLKQMVGN, and QLQQIVDKTIMEADKDGDGKLSFEEFTQMVASTDIV. Aspartate 34, aspartate 36, serine 38, serine 40, glutamate 45, aspartate 66, aspartate 68, serine 70, threonine 72, glutamate 77, aspartate 103, aspartate 105, aspartate 107, tyrosine 109, glutamate 114, aspartate 144, aspartate 146, aspartate 148, lysine 150, and glutamate 155 together coordinate Ca(2+).

It belongs to the calcineurin regulatory subunit family. In terms of assembly, composed of a catalytic subunit (A) and a regulatory subunit (B).

Its function is as follows. Regulatory subunit of calcineurin, a calcium-dependent, calmodulin stimulated protein phosphatase. Confers calcium sensitivity. Plays a central role in virulence and antifungal drug action. This chain is Calcineurin subunit B (CNB1), found in Cryptococcus neoformans var. neoformans serotype D (strain B-3501A) (Filobasidiella neoformans).